Here is a 620-residue protein sequence, read N- to C-terminus: Probable potassium transport system protein Kup (620 aa).

The next 12 membrane-spanning stretches (helical) occupy residues 11–31 (LAFL…LYAF), 51–71 (ILSL…LLLV), 100–120 (IAML…VITP), 138–158 (LAPY…AVQA), 167–187 (FFAP…AHAI), 202–222 (AVHF…LVVL), 246–266 (WFAL…AYLL), 288–308 (LILL…SGIF), 334–354 (GQIY…FVML), 364–384 (AAYG…LVLV), 396–416 (VVTI…STST), and 418–438 (LMEG…VMYI).

The protein belongs to the HAK/KUP transporter (TC 2.A.72) family.

The protein localises to the cell inner membrane. The enzyme catalyses K(+)(in) + H(+)(in) = K(+)(out) + H(+)(out). Functionally, transport of potassium into the cell. Likely operates as a K(+):H(+) symporter. The protein is Probable potassium transport system protein Kup of Vibrio cholerae serotype O1 (strain ATCC 39541 / Classical Ogawa 395 / O395).